The following is a 1095-amino-acid chain: MTKKYEFDWIIPVPPELTTGCVFDRWFENEKETKENDFERDALFKVDEYGFFLYWKSEGRDGDVIELCQVSDIRAGGTPKDPKILDKVTKKNGTNIPELDKRSLTICSNTDYINITYHHVICPDAATAKSWQKNLRLITHNNRATNVCPRVNLMKHWMRLSYCVEKSGKIPVKTLAKTFASGKTEKLVYTCIKDAGLPDDKNATMTKEQFTFDKFYALYHKVCPRNDIEELFTSITKGKQDFISLEQFIQFMNDKQRDPRMNEILYPLYEEKRCTEIINDYELDEEKKKNVQMSLDGFKRYLMSDENAPVFLDRLDFYMEMDQPLAHYYINSSHNTYLSGRQIGGKSSVEMYRQTLLAGCRCVELDCWNGKGEDEEPIVTHGHAYCTEILFKDCIQAIADCAFVSSEYPVILSFENHCNRAQQYKLAKYCDDFFGDLLLKEPLPDHPLDPGLPLPPPCKLKRKILIKNKRMKPEVEKVELELWLKGELKTDDDPEEDASAGKPPEAAAAPAPAPEAAAAAEGAAEGGGGAEAEAAAANYSGSTTNVHPWLSSMVNYAQPIKFQGFDKAIEKNIAHNMSSFAESAGMNYLKQSSIDFVNYNKRQMSRIYPKGTRADSSNYMPQVFWNAGCQMVSLNFQSSDLPMQLNQGKFEYNGGCGYLLKPDFMRRADKDFDPFADAPVDGVIAAQCSVKVIAGQFLSDKKVGTYVEVDMFGLPSDTVKKEFRTRLVANNGLNPVYNEDPFVFRKVVLPDLAVLRFGVYEESGKILGQRILPLDGLQAGYRHVSLRTEANFPMSLPMLFVNIELKIYVPDGFEDFMAMLSDPRGFAGAAKQQNEQMKALGIEEQSGGAARDAGKAKEEEKKEPPLVFEPVTLESLRQEKGFQKVGKKQIKELDTLRKKHAKERTSVQKTQNAAIDKLIKGKSKDDIRNDANIKNSINDQTKQWTDMIARHRKEEWDMLRQHVQDSQDAMKALMLTVQAAQIKQLEDRHARDIKDLNAKQAKMSADTAKEVQNDKTLKTKNEKDRRLREKRQNNVKRFMEEKKQIGVKQGRAMEKLKLAHSKQIEEFSTDVQKLMDMYKIEEEAYKTQGKTEFYA.

Residues 319–469 (MEMDQPLAHY…LKRKILIKNK (151 aa)) form the PI-PLC X-box domain. Residues His-334 and His-381 contribute to the active site. The substrate site is built by Lys-467 and Lys-469. The interval 487–529 (ELKTDDDPEEDASAGKPPEAAAAPAPAPEAAAAAEGAAEGGGG) is disordered. A compositionally biased stretch (low complexity) spans 500–523 (AGKPPEAAAAPAPAPEAAAAAEGA). Residues 550–666 (LSSMVNYAQP…GYLLKPDFMR (117 aa)) form the PI-PLC Y-box domain. Substrate contacts are provided by Ser-579 and Arg-606. The C2 domain maps to 666 to 794 (RRADKDFDPF…SLRTEANFPM (129 aa)). 2 disordered regions span residues 842-863 (IEEQ…EKKE) and 1000-1030 (QAKM…LREK). Composition is skewed to basic and acidic residues over residues 852-863 (DAGKAKEEEKKE) and 1007-1030 (TAKE…LREK).

Interacts with inaD. As to expression, abundantly expressed in the adult retina.

The enzyme catalyses a 1,2-diacyl-sn-glycero-3-phospho-(1D-myo-inositol-4,5-bisphosphate) + H2O = 1D-myo-inositol 1,4,5-trisphosphate + a 1,2-diacyl-sn-glycerol + H(+). Functionally, the production of the second messenger molecules diacylglycerol (DAG) and inositol 1,4,5-trisphosphate (IP3) is mediated by activated phosphatidylinositol-specific phospholipase C enzymes. Essential component of the phototransduction pathway. Essential downstream component of a hh-signaling pathway which regulates the Duox-dependent gut immune response to bacterial uracil; required for the activation of Cad99C and consequently Cad99C-dependent endosome formation, which is essential for the Duox-dependent production of reactive oxygen species (ROS) in response to intestinal bacterial infection. This chain is 1-phosphatidylinositol 4,5-bisphosphate phosphodiesterase, found in Drosophila melanogaster (Fruit fly).